Here is a 545-residue protein sequence, read N- to C-terminus: Hydroxylamine reductase (545 aa).

[4Fe-4S] cluster-binding residues include Cys-3, Cys-6, Cys-15, and Cys-21. Positions 241, 265, 309, 396, 424, 449, 483, and 485 each coordinate hybrid [4Fe-2O-2S] cluster. Cys-396 carries the post-translational modification Cysteine persulfide.

This sequence belongs to the HCP family. Requires [4Fe-4S] cluster as cofactor. The cofactor is hybrid [4Fe-2O-2S] cluster.

Its subcellular location is the cytoplasm. The enzyme catalyses A + NH4(+) + H2O = hydroxylamine + AH2 + H(+). Its function is as follows. Catalyzes the reduction of hydroxylamine to form NH(3) and H(2)O. In Zymomonas mobilis subsp. mobilis (strain ATCC 31821 / ZM4 / CP4), this protein is Hydroxylamine reductase.